The following is a 439-amino-acid chain: Glutamate--tRNA ligase 2 (439 aa).

A 'HIGH' region motif is present at residues Pro6–Asn16. The 'KMSKS' region motif lies at Lys232–Arg236. Lys235 is an ATP binding site.

The protein belongs to the class-I aminoacyl-tRNA synthetase family. Glutamate--tRNA ligase type 1 subfamily. As to quaternary structure, monomer.

Its subcellular location is the cytoplasm. It carries out the reaction tRNA(Glu) + L-glutamate + ATP = L-glutamyl-tRNA(Glu) + AMP + diphosphate. Its function is as follows. Catalyzes the attachment of glutamate to tRNA(Glu) in a two-step reaction: glutamate is first activated by ATP to form Glu-AMP and then transferred to the acceptor end of tRNA(Glu). The protein is Glutamate--tRNA ligase 2 of Helicobacter pylori (strain P12).